The sequence spans 402 residues: Odorant receptor 22c (402 aa).

Residues 1 to 42 are Cytoplasmic-facing; it reads MTDSGQPAIADHFYRIPRISGLIVGLWPQRIRGGGGRPWHAH. The chain crosses the membrane as a helical span at residues 43-63; it reads LLFVFAFAMVVVGAVGEVSYG. At 64–73 the chain is on the extracellular side; sequence CVHLDNLVVA. A helical transmembrane segment spans residues 74 to 94; the sequence is LEAFCPGTTKAVCVLKLWVFF. The Cytoplasmic portion of the chain corresponds to 95–134; it reads RSNRRWAELVQRLRAILWESRRQEAQRMLVGLATTANRLS. The helical transmembrane segment at 135–155 threads the bilayer; that stretch reads LLLLSSGTATNAAFTLQPLIM. At 156–173 the chain is on the extracellular side; the sequence is GLYRWIVQLPGQTELPFN. Residues 174 to 194 form a helical membrane-spanning segment; it reads IILPSFAVQPGVFPLTYVLLT. Residues 195–201 are Cytoplasmic-facing; it reads ASGACTV. The helical transmembrane segment at 202–222 threads the bilayer; the sequence is FAFSFVDGFFICSCLYICGAF. Residues 223-276 are Extracellular-facing; sequence RLVQQDIRRIFADLHGDSVDVFTEEMNAEVRHRLAQVVERHNAIIDFCTDLTRQ. Residues 277 to 297 form a helical membrane-spanning segment; that stretch reads FTVIVLMHFLSAAFVLCSTIL. At 298–307 the chain is on the cytoplasmic side; the sequence is DIMLNTSSLS. Residues 308–328 traverse the membrane as a helical segment; sequence GLTYICYIIAALTQLFLYCFG. The Extracellular portion of the chain corresponds to 329 to 402; the sequence is GNHVSESSAA…SYITLLKTFL (74 aa).

This sequence belongs to the insect chemoreceptor superfamily. Heteromeric odorant receptor channel (TC 1.A.69) family. Or1a subfamily. In terms of assembly, interacts with Orco. Complexes exist early in the endomembrane system in olfactory sensory neurons (OSNs), coupling these complexes to the conserved ciliary trafficking pathway. As to expression, not expressed in either the antenna or maxillary palp.

Its subcellular location is the cell membrane. Functionally, odorant receptor which mediates acceptance or avoidance behavior, depending on its substrates. The odorant receptor repertoire encodes a large collection of odor stimuli that vary widely in identity, intensity, and duration. May form a complex with Orco to form odorant-sensing units, providing sensitive and prolonged odorant signaling and calcium permeability. In Drosophila melanogaster (Fruit fly), this protein is Odorant receptor 22c (Or22c).